The sequence spans 481 residues: Glutamate--tRNA ligase (481 aa).

Residues 28 to 38 carry the 'HIGH' region motif; that stretch reads PSPTGFLHLGG. Residues 139 to 148 are compositionally biased toward basic and acidic residues; sequence RYDGTWRPEP. The interval 139–159 is disordered; it reads RYDGTWRPEPGKTLPPVPADR. The short motif at 260–264 is the 'KMSKS' region element; the sequence is KLSKR. ATP is bound at residue Lys263.

Belongs to the class-I aminoacyl-tRNA synthetase family. Glutamate--tRNA ligase type 1 subfamily. In terms of assembly, monomer.

The protein localises to the cytoplasm. The enzyme catalyses tRNA(Glu) + L-glutamate + ATP = L-glutamyl-tRNA(Glu) + AMP + diphosphate. In terms of biological role, catalyzes the attachment of glutamate to tRNA(Glu) in a two-step reaction: glutamate is first activated by ATP to form Glu-AMP and then transferred to the acceptor end of tRNA(Glu). The chain is Glutamate--tRNA ligase from Bordetella bronchiseptica (strain ATCC BAA-588 / NCTC 13252 / RB50) (Alcaligenes bronchisepticus).